Reading from the N-terminus, the 366-residue chain is Chorismate synthase (366 aa).

Arg48 contributes to the NADP(+) binding site. FMN contacts are provided by residues 131-133 (RAS), 243-244 (NA), Gly288, 303-307 (KPTSS), and Arg329.

It belongs to the chorismate synthase family. As to quaternary structure, homotetramer. The cofactor is FMNH2.

It carries out the reaction 5-O-(1-carboxyvinyl)-3-phosphoshikimate = chorismate + phosphate. It participates in metabolic intermediate biosynthesis; chorismate biosynthesis; chorismate from D-erythrose 4-phosphate and phosphoenolpyruvate: step 7/7. In terms of biological role, catalyzes the anti-1,4-elimination of the C-3 phosphate and the C-6 proR hydrogen from 5-enolpyruvylshikimate-3-phosphate (EPSP) to yield chorismate, which is the branch point compound that serves as the starting substrate for the three terminal pathways of aromatic amino acid biosynthesis. This reaction introduces a second double bond into the aromatic ring system. The protein is Chorismate synthase of Bartonella henselae (strain ATCC 49882 / DSM 28221 / CCUG 30454 / Houston 1) (Rochalimaea henselae).